Reading from the N-terminus, the 117-residue chain is Large ribosomal subunit protein bL20 (117 aa).

Belongs to the bacterial ribosomal protein bL20 family.

Binds directly to 23S ribosomal RNA and is necessary for the in vitro assembly process of the 50S ribosomal subunit. It is not involved in the protein synthesizing functions of that subunit. The polypeptide is Large ribosomal subunit protein bL20 (Lawsonia intracellularis (strain PHE/MN1-00)).